We begin with the raw amino-acid sequence, 957 residues long: Valine--tRNA ligase (957 aa).

A 'HIGH' region motif is present at residues 45–55 (PNVTGSLHMGH). Residues 571-575 (KMSKS) carry the 'KMSKS' region motif. Lys574 is an ATP binding site. The stretch at 887–946 (VVDFAAEQARLEKELGKAEADIKRAEAKLANEKFVANAAEEVVEEEREKREAAVARKVKI) forms a coiled coil.

Belongs to the class-I aminoacyl-tRNA synthetase family. ValS type 1 subfamily. In terms of assembly, monomer.

The protein resides in the cytoplasm. It carries out the reaction tRNA(Val) + L-valine + ATP = L-valyl-tRNA(Val) + AMP + diphosphate. In terms of biological role, catalyzes the attachment of valine to tRNA(Val). As ValRS can inadvertently accommodate and process structurally similar amino acids such as threonine, to avoid such errors, it has a 'posttransfer' editing activity that hydrolyzes mischarged Thr-tRNA(Val) in a tRNA-dependent manner. The polypeptide is Valine--tRNA ligase (Rhodopseudomonas palustris (strain ATCC BAA-98 / CGA009)).